Consider the following 135-residue polypeptide: Transcription antitermination protein NusB (135 aa).

This sequence belongs to the NusB family.

In terms of biological role, involved in transcription antitermination. Required for transcription of ribosomal RNA (rRNA) genes. Binds specifically to the boxA antiterminator sequence of the ribosomal RNA (rrn) operons. This is Transcription antitermination protein NusB from Bdellovibrio bacteriovorus (strain ATCC 15356 / DSM 50701 / NCIMB 9529 / HD100).